The chain runs to 227 residues: Cytochrome c oxidase subunit 2 (227 aa).

Residues 1-14 lie on the Mitochondrial intermembrane side of the membrane; it reads MAYPMQLGFQDATS. A helical membrane pass occupies residues 15 to 45; it reads PIMEELLHFHDHTLMIVFLISSLVLYIISLM. Residues 46–59 lie on the Mitochondrial matrix side of the membrane; sequence LTTKLTHTSTMDAQ. The chain crosses the membrane as a helical span at residues 60 to 87; it reads EVETIWTILPAIILIMIALPSLRILYMM. Residues 88-227 lie on the Mitochondrial intermembrane side of the membrane; it reads DEINNPSLTV…YFEKWSASML (140 aa). Residues Cys-196, Glu-198, Cys-200, His-204, and Met-207 each coordinate Cu cation. Residue Glu-198 coordinates Mg(2+). The residue at position 218 (Tyr-218) is a Phosphotyrosine.

Belongs to the cytochrome c oxidase subunit 2 family. In terms of assembly, component of the cytochrome c oxidase (complex IV, CIV), a multisubunit enzyme composed of 14 subunits. The complex is composed of a catalytic core of 3 subunits MT-CO1, MT-CO2 and MT-CO3, encoded in the mitochondrial DNA, and 11 supernumerary subunits COX4I, COX5A, COX5B, COX6A, COX6B, COX6C, COX7A, COX7B, COX7C, COX8 and NDUFA4, which are encoded in the nuclear genome. The complex exists as a monomer or a dimer and forms supercomplexes (SCs) in the inner mitochondrial membrane with NADH-ubiquinone oxidoreductase (complex I, CI) and ubiquinol-cytochrome c oxidoreductase (cytochrome b-c1 complex, complex III, CIII), resulting in different assemblies (supercomplex SCI(1)III(2)IV(1) and megacomplex MCI(2)III(2)IV(2)). Found in a complex with TMEM177, COA6, COX18, COX20, SCO1 and SCO2. Interacts with TMEM177 in a COX20-dependent manner. Interacts with COX20. Interacts with COX16. Requires Cu cation as cofactor.

The protein resides in the mitochondrion inner membrane. It carries out the reaction 4 Fe(II)-[cytochrome c] + O2 + 8 H(+)(in) = 4 Fe(III)-[cytochrome c] + 2 H2O + 4 H(+)(out). Its function is as follows. Component of the cytochrome c oxidase, the last enzyme in the mitochondrial electron transport chain which drives oxidative phosphorylation. The respiratory chain contains 3 multisubunit complexes succinate dehydrogenase (complex II, CII), ubiquinol-cytochrome c oxidoreductase (cytochrome b-c1 complex, complex III, CIII) and cytochrome c oxidase (complex IV, CIV), that cooperate to transfer electrons derived from NADH and succinate to molecular oxygen, creating an electrochemical gradient over the inner membrane that drives transmembrane transport and the ATP synthase. Cytochrome c oxidase is the component of the respiratory chain that catalyzes the reduction of oxygen to water. Electrons originating from reduced cytochrome c in the intermembrane space (IMS) are transferred via the dinuclear copper A center (CU(A)) of subunit 2 and heme A of subunit 1 to the active site in subunit 1, a binuclear center (BNC) formed by heme A3 and copper B (CU(B)). The BNC reduces molecular oxygen to 2 water molecules using 4 electrons from cytochrome c in the IMS and 4 protons from the mitochondrial matrix. This is Cytochrome c oxidase subunit 2 (MT-CO2) from Ovis aries (Sheep).